The sequence spans 146 residues: Putative actin-depolymerizing factor 8 (146 aa).

The region spanning 14–144 (PAWIEVPEKS…DLEVLRGRAN (131 aa)) is the ADF-H domain.

This sequence belongs to the actin-binding proteins ADF family.

Actin-depolymerizing protein. Severs actin filaments (F-actin) and binds to actin monomers. The polypeptide is Putative actin-depolymerizing factor 8 (ADF8) (Oryza sativa subsp. japonica (Rice)).